The chain runs to 357 residues: Sorbitol dehydrogenase (357 aa).

An N-acetylalanine modification is found at alanine 2. A Zn(2+)-binding site is contributed by cysteine 45. Position 51 (tyrosine 51) interacts with substrate. The Zn(2+) site is built by histidine 70 and glutamate 71. Glutamate 156 is a substrate binding site. Isoleucine 184, aspartate 204, and arginine 209 together coordinate NAD(+). 2 positions are modified to phosphoserine: serine 211 and serine 225. Residues 273 to 275 (VGL) and 297 to 299 (VFR) contribute to the NAD(+) site. Residues arginine 299 and tyrosine 300 each coordinate substrate.

It belongs to the zinc-containing alcohol dehydrogenase family. In terms of assembly, homotetramer. Zn(2+) is required as a cofactor.

The protein resides in the mitochondrion membrane. The protein localises to the cell projection. It localises to the cilium. Its subcellular location is the flagellum. The enzyme catalyses xylitol + NAD(+) = D-xylulose + NADH + H(+). The catalysed reaction is L-iditol + NAD(+) = keto-L-sorbose + NADH + H(+). It carries out the reaction keto-D-fructose + NADH + H(+) = D-sorbitol + NAD(+). Functionally, polyol dehydrogenase that catalyzes the reversible NAD(+)-dependent oxidation of various sugar alcohols. Is active with xylitol, L-iditol and D-sorbitol (D-glucitol) as substrates, leading to the C2-oxidized products D-xylulose, L-sorbose and D-fructose, respectively. Is a key enzyme in the polyol pathway that interconverts glucose and fructose via sorbitol, which constitutes an important alternate route for glucose metabolism. May play a role in sperm motility by using sorbitol as an alternative energy source for sperm motility. The polypeptide is Sorbitol dehydrogenase (SORD) (Pongo abelii (Sumatran orangutan)).